The chain runs to 458 residues: Phosphoglucosamine mutase (458 aa).

Ser-106 functions as the Phosphoserine intermediate in the catalytic mechanism. The Mg(2+) site is built by Ser-106, Asp-247, Asp-249, and Asp-251. Ser-106 carries the phosphoserine modification.

The protein belongs to the phosphohexose mutase family. Requires Mg(2+) as cofactor. Post-translationally, activated by phosphorylation.

The catalysed reaction is alpha-D-glucosamine 1-phosphate = D-glucosamine 6-phosphate. Functionally, catalyzes the conversion of glucosamine-6-phosphate to glucosamine-1-phosphate. This is Phosphoglucosamine mutase from Chlamydia trachomatis serovar D (strain ATCC VR-885 / DSM 19411 / UW-3/Cx).